The following is a 103-amino-acid chain: Putative defensin-like protein 305 (103 aa).

An N-terminal signal peptide occupies residues 1–31 (MREEILEIFLLVNFVFILCTSIMVRIRYVSC). Disulfide bonds link Cys-31-Cys-51, Cys-37-Cys-56, and Cys-42-Cys-58.

It belongs to the DEFL family.

It is found in the secreted. The protein is Putative defensin-like protein 305 of Arabidopsis thaliana (Mouse-ear cress).